We begin with the raw amino-acid sequence, 542 residues long: Beta-amylase 2, chloroplastic (542 aa).

The N-terminal 55 residues, methionine 1–arginine 55, are a transit peptide targeting the chloroplast. Substrate contacts are provided by aspartate 136, histidine 176, and aspartate 184. Glutamate 269 functions as the Proton donor in the catalytic mechanism. Residues lysine 377, histidine 382, and threonine 424 each contribute to the substrate site. Glutamate 465 acts as the Proton acceptor in catalysis. Substrate-binding positions include asparagine 466–alanine 467 and arginine 501.

It belongs to the glycosyl hydrolase 14 family.

It is found in the plastid. It localises to the chloroplast. It carries out the reaction Hydrolysis of (1-&gt;4)-alpha-D-glucosidic linkages in polysaccharides so as to remove successive maltose units from the non-reducing ends of the chains.. Redox regulation; active in reducing conditions, inactive in oxidizing conditions. In terms of biological role, low beta-amylase activity. Interacts poorly with starch or other alpha-1,4-glucan. The sequence is that of Beta-amylase 2, chloroplastic (BAM2) from Arabidopsis thaliana (Mouse-ear cress).